Consider the following 246-residue polypeptide: Probable transcriptional regulatory protein WRi_002620 (246 aa).

The interval 1 to 22 is disordered; that stretch reads MAGHSQFSNIKHRKGAQDAKRS.

This sequence belongs to the TACO1 family.

Its subcellular location is the cytoplasm. This chain is Probable transcriptional regulatory protein WRi_002620, found in Wolbachia sp. subsp. Drosophila simulans (strain wRi).